The chain runs to 171 residues: SPbeta prophage-derived uncharacterized protein YokC (171 aa).

The protein is SPbeta prophage-derived uncharacterized protein YokC (yokC) of Bacillus subtilis (strain 168).